Here is a 145-residue protein sequence, read N- to C-terminus: Probable transport accessory protein MmpS2 (145 aa).

Residues 11 to 31 (MWLLLAIVVVAVVGGLGIYRL) traverse the membrane as a helical segment.

This sequence belongs to the MmpS family.

The protein resides in the cell membrane. The chain is Probable transport accessory protein MmpS2 (mmpS2) from Mycobacterium bovis (strain ATCC BAA-935 / AF2122/97).